A 2121-amino-acid chain; its full sequence is Non-reducing polyketide synthase aoiG (2121 aa).

The Starter acyltransferase (SAT) domain maps to Tyr-5–His-258. The 432-residue stretch at Ser-386–Asp-817 folds into the Ketosynthase family 3 (KS3) domain. Catalysis depends on for beta-ketoacyl synthase activity residues Cys-558, His-693, and His-735. One can recognise a Malonyl-CoA:ACP transacylase (MAT) domain in the interval Phe-921–Arg-1239. The interval Gln-1302 to Gln-1433 is N-terminal hotdog fold. The PKS/mFAS DH domain occupies Gln-1302–Glu-1608. His-1334 acts as the Proton acceptor; for dehydratase activity in catalysis. Residues Thr-1461–Glu-1608 are C-terminal hotdog fold. The active-site Proton donor; for dehydratase activity is Asp-1519. In terms of domain architecture, Carrier 1 spans Pro-1646–Ser-1723. The residue at position 1683 (Ser-1683) is an O-(pantetheine 4'-phosphoryl)serine. The segment covering Asp-1728–Ser-1752 has biased composition (low complexity). The tract at residues Asp-1728–Ser-1760 is disordered. The Carrier 2 domain occupies Asp-1763–Phe-1840. The residue at position 1800 (Ser-1800) is an O-(pantetheine 4'-phosphoryl)serine. Residues Thr-1872–Gly-1976 are TE/CLC (thioesterase/Claisen cyclase) domain.

Requires pantetheine 4'-phosphate as cofactor.

Its function is as follows. Non-reducing polyketide synthase; part of the gene cluster that mediates the biosynthesis of a methylated derivative of known natural products orthosporin and diaporthin. AoiG catalyzes the biosynthesis of the hexaketide isocoumarin scaffold, via condensation of one acetyl-CoA starter unit with 6 malonyl-CoA units. An oxidoreductase that has still to be identified catalyzes the stereospecific reduction of the carbonyl moiety of the hexaketide isocoumarin scaffold to generate the S-configured secondary alcohol at C-11 of orthosporin. The methyltrasferase aoiF then catalyzes the biotransformation of not only orthosporin to diaporthin but also diaporthin to the final product, by performing a tandem methylation of the polyketide core. This chain is Non-reducing polyketide synthase aoiG, found in Aspergillus oryzae (strain ATCC 42149 / RIB 40) (Yellow koji mold).